A 796-amino-acid polypeptide reads, in one-letter code: Ent-copalyl diphosphate synthase 4 (796 aa).

Residues 1 to 23 constitute a chloroplast transit peptide; the sequence is MSSSSIVTSLLRPTTAADGVLPR. Substrate is bound at residue Lys-240. Asp-371 and Asp-373 together coordinate Mg(2+). Positions 371–374 match the DXDD motif motif; it reads DVDD. Residue Lys-457 coordinates substrate.

Belongs to the terpene synthase family. Tpsc subfamily. It depends on Mg(2+) as a cofactor. As to expression, highly expressed in leaves, and, at low levels, in stems, but barely in roots and flowers.

The protein resides in the plastid. Its subcellular location is the chloroplast. The enzyme catalyses (2E,6E,10E)-geranylgeranyl diphosphate = ent-copalyl diphosphate. Its pathway is secondary metabolite biosynthesis; terpenoid biosynthesis. Its function is as follows. Involved in the biosynthesis of ent-kaurene diterpenoids natural products such as oridonin, miltiradiene, eriocalyxin B and nezukol, known to exhibit antitumor, anti-inflammatory and antibacterial activities. Catalyzes the conversion of (2E,6E,10E)-geranylgeranyl diphosphate (GGPP) to ent-copalyl diphosphate (ent-CPP). This is Ent-copalyl diphosphate synthase 4 from Isodon rubescens (Rabdosia rubescens).